Consider the following 333-residue polypeptide: Squamosa promoter-binding-like protein 8 (333 aa).

The disordered stretch occupies residues 1-28 (MLDYEWDNPSSIVLSGDERNPDSDPTRS). Basic and acidic residues predominate over residues 16–25 (GDERNPDSDP). Residues 179–269 (MANSLSTPRC…RKCHQSASAT (91 aa)) are sufficient and necessary for DNA binding. The segment at 185–262 (TPRCQAEGCN…ADHNRRRRKC (78 aa)) adopts an SBP-type zinc-finger fold. Positions 188, 193, 210, 213, 229, 232, 236, and 248 each coordinate Zn(2+). The Bipartite nuclear localization signal signature appears at 245-261 (KRSCRKRLADHNRRRRK). Disordered stretches follow at residues 254–303 (DHNR…TISL) and 314–333 (TASSSTSASSSSNSMFFSSG). The span at 264-284 (QSASATQDTGTGKTTPKSPND) shows a compositional bias: polar residues. The segment covering 289-299 (ASSSPSSNAPP) has biased composition (low complexity).

Requires Zn(2+) as cofactor. In terms of tissue distribution, expressed in shoot apical region and early floral tissues. Transcripts levels increase in developing pollen sacs, and decrease in later stage of anther development. Strongly expressed in the placental region of the carpels.

It localises to the nucleus. Its subcellular location is the cytoplasm. Functionally, trans-acting factor that binds specifically to the consensus nucleotide sequence 5'-TNCGTACAA-3'. Binds specifically to the 5'-GTAC-3' core sequence. Involved in development and floral organogenesis. Required for ovule differentiation, pollen production, filament elongation, seed formation and siliques elongation. Also seems to play a role in the formation of trichomes on sepals. May positively modulate gibberellin (GA) signaling in flower. This Arabidopsis thaliana (Mouse-ear cress) protein is Squamosa promoter-binding-like protein 8 (SPL8).